The chain runs to 283 residues: Shikimate dehydrogenase (NADP(+)) (283 aa).

Residues 19-21 (SFS) and Thr-66 contribute to the shikimate site. Lys-70 serves as the catalytic Proton acceptor. Residue Glu-82 participates in NADP(+) binding. 2 residues coordinate shikimate: Asn-91 and Asp-106. Residues 129–133 (GAGGA) and Ile-225 contribute to the NADP(+) site. Residue Tyr-227 participates in shikimate binding. An NADP(+)-binding site is contributed by Gly-248.

It belongs to the shikimate dehydrogenase family. As to quaternary structure, homodimer.

It catalyses the reaction shikimate + NADP(+) = 3-dehydroshikimate + NADPH + H(+). It participates in metabolic intermediate biosynthesis; chorismate biosynthesis; chorismate from D-erythrose 4-phosphate and phosphoenolpyruvate: step 4/7. Involved in the biosynthesis of the chorismate, which leads to the biosynthesis of aromatic amino acids. Catalyzes the reversible NADPH linked reduction of 3-dehydroshikimate (DHSA) to yield shikimate (SA). This Methanosphaera stadtmanae (strain ATCC 43021 / DSM 3091 / JCM 11832 / MCB-3) protein is Shikimate dehydrogenase (NADP(+)).